A 727-amino-acid chain; its full sequence is MNDWHEFNAAIKSIYCNAEGDSSSIINRLVGLAMKSEDSTFIEAVLVLKENVSKVDKQLRFLWLTSTINSRFYPPIPISEASPVSWNKTEYCAPGTEELQRRYPGRAKLQNEEDYSGGIEQCRDVPDCSLVASLINLRSKNLNLPLIKQISSTKYHVNLSFNGSNKRLVTVDISQIPTSVDGKQLSLKSNDISDKIGELALLLVSKGTYSTDGSNISIDTYRLSGFLPEITQVNSYPFEKLWKFHKSNLCLMGAGTGNRSNDMIKPLVENHDYSIIDITYDSRLVKLRDPRNSALNVEISYEQYLKNFKQLYLNWNQEKLFKRSQVLHFRYDTSRYNKFSIVADKPLFHLVNNSKVTETVWLLLESHLQDEGSQENRSVSFLNEAPECIICPIEPPVECGGNHIGLQLVKLRLDAETERLLYCYSTTNNNFSIHSFSVVKEICFQRLKDTKSLFAKVLFSFPYEIEGKASFDTCNFFQNPTFELEVHSEQDYQVLMDAACISTSSHDLINIQVYYFNDYELIKPIMFDNHYQPGQGLKQDVPILTNVKYMIVCSTYGPPASTEFELLASIRLSSSWRLISGITLRSVNLIYGTYPYHCRNRFHWKETSDKLKIQMTLPTKKYSTNKLFIRVVPVESSARLRMRCNIFEPESALCVYECQEYRTCPSGGIVIPDLEVSRTNIVVLMIERSVPISSCLPTEGQLDELELFVGSSQKIRIEKYSDDVIPK.

The region spanning 70–317 (SRFYPPIPIS…FKQLYLNWNQ (248 aa)) is the Calpain catalytic domain. Catalysis depends on residues Cys-128, His-271, and Asn-296.

This sequence belongs to the peptidase C2 family. PalB/RIM13 subfamily. As to quaternary structure, interacts with SNF7, which may act together with RIM20 as a scaffold to recruit RIM13 to its substrate RIM101.

In terms of biological role, required for the proteolytic cleavage of the transcriptional repressor RIM101 in response to alkaline ambient pH, which is necessary for sporulation and invasive growth. Probably the protease that cleaves RIM101. This is Calpain-like protease 1 (RIM13) from Saccharomyces cerevisiae (strain ATCC 204508 / S288c) (Baker's yeast).